The following is a 131-amino-acid chain: uncharacterized protein (131 aa).

The helical transmembrane segment at 17–39 threads the bilayer; it reads VILLILILLPVVFLHIMLATWGL.

It localises to the membrane. This is an uncharacterized protein from Archaeoglobus fulgidus (strain ATCC 49558 / DSM 4304 / JCM 9628 / NBRC 100126 / VC-16).